The sequence spans 606 residues: Leucine-rich repeat and immunoglobulin-like domain-containing nogo receptor-interacting protein 2 (606 aa).

Residues 1 to 27 (MLHTAISCWQPFLGLAVVLIFMGSTIG) form the signal peptide. The LRRNT domain occupies 28–57 (CPARCECSAQNKSVSCHRRRLIAIPEGIPI). At 28-545 (CPARCECSAQ…LDLKTILVST (518 aa)) the chain is on the extracellular side. N38 is a glycosylation site (N-linked (GlcNAc...) asparagine). LRR repeat units follow at residues 58 to 79 (ETKILDLSKNRLKSVNPEEFIS), 82 to 103 (LLEEIDLSDNIIANVEPGAFNN), 106 to 127 (NLRSLRLKGNRLKLVPLGVFTG), 130 to 151 (NLTKLDISENKIVILLDYMFQD), 154 to 175 (NLKSLEVGDNDLVYISHRAFSG), 178 to 199 (SLEQLTLEKCNLTAVPTEALSH), 202 to 223 (SLISLHLKHLNINNMPVYAFKR), 226 to 247 (HLKHLEIDYWPLLDMMPANSLY), 250 to 271 (NLTSLSVTNTNLSTVPFLAFKH), 274 to 295 (YLTHLNLSYNPISTIEAGMFSD), 298 to 319 (RLQELHIVGAQLRTIEPHSFQG), and 322 to 343 (FLRVLNVSQNLLETLEENVFSS). N130 is a glycosylation site (N-linked (GlcNAc...) asparagine). N188 is a glycosylation site (N-linked (GlcNAc...) asparagine). N-linked (GlcNAc...) asparagine glycosylation is present at N279. N-linked (GlcNAc...) asparagine glycosylation occurs at N327. The LRRCT domain maps to 355-409 (NPLACDCRLLWILQRQPTLQFGGQQPMCAGPDTIRERSFKDFHSTALSFYFTCKK). The 90-residue stretch at 410-499 (PKIREKKLQH…GNDTFTASLT (90 aa)) folds into the Ig-like C2-type domain. The cysteines at positions 432 and 483 are disulfide-linked. A helical transmembrane segment spans residues 546 to 566 (AMGCFTFLGVVLFCFLLLFVW). Topologically, residues 567 to 606 (SRGKGKHKNSIDLEYVPRKNNGAVVEGEVAGPRRFNMKMI) are cytoplasmic.

Its subcellular location is the membrane. This chain is Leucine-rich repeat and immunoglobulin-like domain-containing nogo receptor-interacting protein 2 (LINGO2), found in Homo sapiens (Human).